The primary structure comprises 1073 residues: MAWVKFLRKPGGNLGKVYQPGSMLSLAPTKGLLNEPGQNSCFLNSAVQVLWQLDIFRRSLRVLTGHVCQGDACIFCALKTIFAQFQHSREKALPSDNIRHALAESFKDEQRFQLGLMDDAAECFENMLERIHFHIVPSRDADMCTSKSCITHQKFAMTLYEQCVCRSCGASSDPLPFTEFVRYISTTALCNEVERMLERHERFKPEMFAELLQAANTTDDYRKCPSNCGQKIKIRRVLMNCPEIVTIGLVWDSEHSDLTEAVVRNLATHLYLPGLFYRVTDENAKNSELNLVGMICYTSQHYCAFAFHTKSSKWVFFDDANVKEIGTRWKDVVSKCIRCHFQPLLLFYANPDGTAVSTEDALRQVISWSHYKSVAENMGCEKPVIHKSDNLKENGFGDQAKQRENQKFPTDNISSSNRSHSHTGVGKGPAKLSHIDQREKIKDISRECALKAIEQKNLLSSQRKDLEKGQRKDLGRHRDLVDEDLSHFQSGSPPAPNGFKQHGNPHLYHSQGKGSYKHDRVVPQSRASAQIISSSKSQILAPGEKITGKVKSDNGTGYDTDSSQDSRDRGNSCDSSSKSRNRGWKPMRETLNVDSIFSESEKRQHSPRHKPNISNKPKSSKDPSFSNWPKENPKQKGLMTIYEDEMKQEIGSRSSLESNGKGAEKNKGLVEGKVHGDNWQMQRTESGYESSDHISNGSTNLDSPVIDGNGTVMDISGVKETVCFSDQITTSNLNKERGDCTSLQSQHHLEGFRKELRNLEAGYKSHEFHPESHLQIKNHLIKRSHVHEDNGKLFPSSSLQIPKDHNAREHIHQSDEQKLEKPNECKFSEWLNIENSERTGLPFHVDNSASGKRVNSNEPSSLWSSHLRTVGLKPETAPLIQQQNIMDQCYFENSLSTECIIRSASRSDGCQMPKLFCQNLPPPLPPKKYAITSVPQSEKSESTPDVKLTEVFKATSHLPKHSLSTASEPSLEVSTHMNDERHKETFQVRECFGNTPNCPSSSSTNDFQANSGAIDAFCQPELDSISTCPNETVSLTTYFSVDSCMTDTYRLKYHQRPKLSFPESSGFCNNSLS.

In terms of domain architecture, USP spans 30–351 (KGLLNEPGQN…QPLLLFYANP (322 aa)). The active-site Nucleophile is Cys41. Zn(2+) is bound by residues His66, Cys68, Cys73, Cys76, His132, Cys144, Cys149, His152, Cys165, Cys168, Cys224, and Cys228. His301 acts as the Proton acceptor in catalysis. Disordered regions lie at residues 391-437 (LKEN…HIDQ) and 485-636 (LSHF…PKQK). A compositionally biased stretch (polar residues) spans 407–418 (KFPTDNISSSNR). The span at 524 to 541 (QSRASAQIISSSKSQILA) shows a compositional bias: low complexity. Polar residues predominate over residues 553–563 (DNGTGYDTDSS). The span at 612 to 627 (NISNKPKSSKDPSFSN) shows a compositional bias: low complexity.

Belongs to the peptidase C19 family. As to quaternary structure, interacts (via the C-terminal region) with the heterodimer TJP1:TJP2. In terms of tissue distribution, expressed predominantly in skeletal muscle and heart.

It is found in the cell junction. It localises to the tight junction. It catalyses the reaction Thiol-dependent hydrolysis of ester, thioester, amide, peptide and isopeptide bonds formed by the C-terminal Gly of ubiquitin (a 76-residue protein attached to proteins as an intracellular targeting signal).. Functionally, deubiquitinase that mediates 'Lys-63'-linked deubiquitination of tight junction proteins, such as MARVELD2 and LSR, and which is involved in the survival of auditory hair cells and hearing. Specifically cleaves 'Lys-63'-linked polyubiquitin chains composed of at least 3 ubiquitin molecules, while it is not able to deubiquitinate substrates with shorter ubiquitin chains: recognizes ubiquitin chain in position S2 and catalyzes en bloc cleavage of polyubiquitin chains from substrate proteins. Probably acts by modulating the barrier properties and mechanical stability of tight junctions via deubiquitination of MARVELD2 and LSR. The polypeptide is Ubiquitin carboxyl-terminal hydrolase 53 (Homo sapiens (Human)).